The primary structure comprises 379 residues: Homoserine O-acetyltransferase (379 aa).

Residues 52–356 (NVVVVLHALT…VYGHDGFLVE (305 aa)) form the AB hydrolase-1 domain. Serine 157 acts as the Nucleophile in catalysis. Arginine 227 contributes to the substrate binding site. Residues aspartate 320 and histidine 350 contribute to the active site. Aspartate 351 contributes to the substrate binding site.

The protein belongs to the AB hydrolase superfamily. MetX family. In terms of assembly, homodimer.

It is found in the cytoplasm. It carries out the reaction L-homoserine + acetyl-CoA = O-acetyl-L-homoserine + CoA. It participates in amino-acid biosynthesis; L-methionine biosynthesis via de novo pathway; O-acetyl-L-homoserine from L-homoserine: step 1/1. Its function is as follows. Transfers an acetyl group from acetyl-CoA to L-homoserine, forming acetyl-L-homoserine. This is Homoserine O-acetyltransferase from Mycobacterium tuberculosis (strain CDC 1551 / Oshkosh).